Consider the following 67-residue polypeptide: DNA-directed RNA polymerase subunit omega (67 aa).

It belongs to the RNA polymerase subunit omega family. The RNAP catalytic core consists of 2 alpha, 1 beta, 1 beta' and 1 omega subunit. When a sigma factor is associated with the core the holoenzyme is formed, which can initiate transcription.

The enzyme catalyses RNA(n) + a ribonucleoside 5'-triphosphate = RNA(n+1) + diphosphate. Its function is as follows. Promotes RNA polymerase assembly. Latches the N- and C-terminal regions of the beta' subunit thereby facilitating its interaction with the beta and alpha subunits. This chain is DNA-directed RNA polymerase subunit omega, found in Methylibium petroleiphilum (strain ATCC BAA-1232 / LMG 22953 / PM1).